The following is a 283-amino-acid chain: Phosphatidylglycerol--prolipoprotein diacylglyceryl transferase (283 aa).

7 helical membrane passes run 21–41 (LAVR…LWLA), 60–80 (LLFA…VLFY), 95–115 (VWTG…AMLW), 124–144 (FFTI…AGRL), 176–196 (SQLY…NWFI), 203–223 (GAVS…VEYV), and 239–259 (MGQI…LWAF). Arg143 provides a ligand contact to a 1,2-diacyl-sn-glycero-3-phospho-(1'-sn-glycerol).

This sequence belongs to the Lgt family.

It is found in the cell inner membrane. The catalysed reaction is L-cysteinyl-[prolipoprotein] + a 1,2-diacyl-sn-glycero-3-phospho-(1'-sn-glycerol) = an S-1,2-diacyl-sn-glyceryl-L-cysteinyl-[prolipoprotein] + sn-glycerol 1-phosphate + H(+). The protein operates within protein modification; lipoprotein biosynthesis (diacylglyceryl transfer). Its function is as follows. Catalyzes the transfer of the diacylglyceryl group from phosphatidylglycerol to the sulfhydryl group of the N-terminal cysteine of a prolipoprotein, the first step in the formation of mature lipoproteins. In Aliivibrio fischeri (strain MJ11) (Vibrio fischeri), this protein is Phosphatidylglycerol--prolipoprotein diacylglyceryl transferase.